A 617-amino-acid polypeptide reads, in one-letter code: RNA polymerase sigma factor RpoD (617 aa).

Positions 170–220 (PDDGSLPAEEVEPVNLKDDSADSKEKDDEEEESDDSSDSDDEGDGGPDPEE) are disordered. The span at 184-195 (NLKDDSADSKEK) shows a compositional bias: basic and acidic residues. Residues 196–218 (DDEEEESDDSSDSDDEGDGGPDP) show a composition bias toward acidic residues. Residues 383-453 (MVEANLRLVI…TRSIADQART (71 aa)) are sigma-70 factor domain-2. An Interaction with polymerase core subunit RpoC motif is present at residues 407-410 (DLIQ). A sigma-70 factor domain-3 region spans residues 462–538 (ETINKLNRIS…DSTMQSPIEM (77 aa)). Positions 551–604 (VLAGLTAREAKVLRMRFGIDMNTDHTLEEVGKQFDVTRERIRQIEAKALRKLRH) are sigma-70 factor domain-4. A DNA-binding region (H-T-H motif) is located at residues 577–596 (LEEVGKQFDVTRERIRQIEA).

Belongs to the sigma-70 factor family. RpoD/SigA subfamily. Interacts transiently with the RNA polymerase catalytic core.

It is found in the cytoplasm. Its function is as follows. Sigma factors are initiation factors that promote the attachment of RNA polymerase to specific initiation sites and are then released. This sigma factor is the primary sigma factor during exponential growth. The protein is RNA polymerase sigma factor RpoD of Pseudomonas aeruginosa (strain ATCC 15692 / DSM 22644 / CIP 104116 / JCM 14847 / LMG 12228 / 1C / PRS 101 / PAO1).